We begin with the raw amino-acid sequence, 124 residues long: Small ribosomal subunit protein uS12 (124 aa).

Asp89 is modified (3-methylthioaspartic acid).

This sequence belongs to the universal ribosomal protein uS12 family. As to quaternary structure, part of the 30S ribosomal subunit. Contacts proteins S8 and S17. May interact with IF1 in the 30S initiation complex.

In terms of biological role, with S4 and S5 plays an important role in translational accuracy. Functionally, interacts with and stabilizes bases of the 16S rRNA that are involved in tRNA selection in the A site and with the mRNA backbone. Located at the interface of the 30S and 50S subunits, it traverses the body of the 30S subunit contacting proteins on the other side and probably holding the rRNA structure together. The combined cluster of proteins S8, S12 and S17 appears to hold together the shoulder and platform of the 30S subunit. This is Small ribosomal subunit protein uS12 from Shewanella baltica (strain OS223).